Reading from the N-terminus, the 115-residue chain is NADH-ubiquinone oxidoreductase chain 3 (115 aa).

3 helical membrane-spanning segments follow: residues 4 to 24 (LMAL…AFWL), 55 to 75 (FFLV…LLPL), and 84 to 104 (INIM…GLAY).

It belongs to the complex I subunit 3 family. As to quaternary structure, core subunit of respiratory chain NADH dehydrogenase (Complex I) which is composed of 45 different subunits. Interacts with TMEM186. Interacts with TMEM242.

Its subcellular location is the mitochondrion inner membrane. It carries out the reaction a ubiquinone + NADH + 5 H(+)(in) = a ubiquinol + NAD(+) + 4 H(+)(out). Functionally, core subunit of the mitochondrial membrane respiratory chain NADH dehydrogenase (Complex I) which catalyzes electron transfer from NADH through the respiratory chain, using ubiquinone as an electron acceptor. Essential for the catalytic activity of complex I. This is NADH-ubiquinone oxidoreductase chain 3 from Peromyscus melanotis (Black-eared mouse).